A 333-amino-acid chain; its full sequence is Photosystem II assembly protein Ycf48 (333 aa).

An N-terminal signal peptide occupies residues 1–25 (MRVKMFKPLRLVLLIAVSVLLMAAR).

Belongs to the Ycf48 family. As to quaternary structure, part of early PSII assembly complexes which includes D1 (psbA) and PsbI; not found in mature PSII. Binds to the lumenal side of PSII complexes. Interacts with YidC.

Its subcellular location is the cellular thylakoid lumen. A factor required for optimal assembly of photosystem II (PSII), acting in the early stages of PSII assembly. Also plays a role in replacement of photodamaged D1 (psbA). Assists YidC in synthesis of chlorophyll-binding proteins. The chain is Photosystem II assembly protein Ycf48 from Synechococcus sp. (strain JA-2-3B'a(2-13)) (Cyanobacteria bacterium Yellowstone B-Prime).